The chain runs to 970 residues: Serine/threonine-protein kinase PLK4 (970 aa).

In terms of domain architecture, Protein kinase spans 12–265 (FKVGNLLGKG…LSSVLDHPFM (254 aa)). ATP is bound by residues 18 to 26 (LGKGSFAGV) and Lys41. Lys45 and Lys46 each carry N6-acetyllysine. The active-site Proton acceptor is Asp136. Disordered regions lie at residues 323-458 (TVFP…NHLC) and 497-538 (SISP…HSVK). Over residues 328 to 356 (NKSSTDFSSSGDGNSFYTQWGNQETSNSG) the composition is skewed to polar residues. Residues 360–369 (VIQDAEERPH) show a composition bias toward basic and acidic residues. The segment covering 379–393 (SDRSGTSNSQSQAKT) has biased composition (polar residues). Ser401 carries the phosphoserine modification. Polar residues predominate over residues 438–454 (SSSSGSFERPDNNQALS). The segment covering 504–515 (FQGHPDLQKDTS) has biased composition (basic and acidic residues). The 114-residue stretch at 586-699 (TLRSITSPLV…SRFVQLVRSK (114 aa)) folds into the Cryptic POLO box 1 (CPB1) domain. Ser665 is modified (phosphoserine). The region spanning 700–813 (SPKITYFTRY…GRKPGSTSSP (114 aa)) is the Cryptic POLO box 2 (CPB2) domain. Positions 808-828 (GSTSSPKALSPPPSVDSNYPT) are disordered. Ser817 is subject to Phosphoserine. The POLO box domain maps to 886–964 (QLLKSVFVKN…LSSILLMFSN (79 aa)).

It belongs to the protein kinase superfamily. Ser/Thr protein kinase family. CDC5/Polo subfamily. Homodimer. Interacts with CEP152 (via N-terminus). Interacts with CEP78; this interaction may be important for proper PLK4 localization to the centriole and PLK4-induced overduplication of centrioles. Interacts with CEP131. Interacts simultaneously with TENT5C and CEP192. Interacts with TENT5C; this interaction leads to the TENT5C recruitment in the centrosome. Interacts with CEP85; this interaction may be important in cell migration and centriole assembly. In terms of processing, acetylation by KAT2A and KAT2B impairs kinase activity by shifting the kinase to an inactive conformation. Post-translationally, ubiquitinated; leading to its degradation by the proteasome. Deubiquitinated by USP54; leading to PLK4 stabilization. Tyrosine-phosphorylated by TEC.

Its subcellular location is the cytoplasm. It localises to the cytoskeleton. It is found in the microtubule organizing center. The protein localises to the centrosome. The protein resides in the centriole. Its subcellular location is the nucleus. It localises to the nucleolus. It is found in the cleavage furrow. The catalysed reaction is L-seryl-[protein] + ATP = O-phospho-L-seryl-[protein] + ADP + H(+). The enzyme catalyses L-threonyl-[protein] + ATP = O-phospho-L-threonyl-[protein] + ADP + H(+). In terms of biological role, serine/threonine-protein kinase that plays a central role in centriole duplication. Able to trigger procentriole formation on the surface of the parental centriole cylinder, leading to the recruitment of centriole biogenesis proteins such as SASS6, CPAP, CCP110, CEP135 and gamma-tubulin. When overexpressed, it is able to induce centrosome amplification through the simultaneous generation of multiple procentrioles adjoining each parental centriole during S phase. Phosphorylates 'Ser-151' of FBXW5 during the G1/S transition, leading to inhibit FBXW5 ability to ubiquitinate SASS6. Its central role in centriole replication suggests a possible role in tumorigenesis, centrosome aberrations being frequently observed in tumors. Also involved in deuterosome-mediated centriole amplification in multiciliated that can generate more than 100 centrioles. Also involved in trophoblast differentiation by phosphorylating HAND1, leading to disrupt the interaction between HAND1 and MDFIC and activate HAND1. Phosphorylates CDC25C and CHEK2. Required for the recruitment of STIL to the centriole and for STIL-mediated centriole amplification. Phosphorylates CEP131 at 'Ser-78' and PCM1 at 'Ser-372' which is essential for proper organization and integrity of centriolar satellites. The sequence is that of Serine/threonine-protein kinase PLK4 from Homo sapiens (Human).